The sequence spans 1114 residues: Lysylphosphatidylglycerol biosynthesis bifunctional protein LysX (1114 aa).

Residues 1 to 11 (MSASTETHHAS) show a composition bias toward basic and acidic residues. The disordered stretch occupies residues 1 to 28 (MSASTETHHASEAAVPTAPRPRPALGSK). The tract at residues 1–618 (MSASTETHHA…GLHSDGSAPG (618 aa)) is phosphatidylglycerol lysyltransferase. The next 6 helical transmembrane spans lie at 38 to 58 (IAGL…ISPV), 77 to 97 (APDT…ALAS), 101 to 121 (IAWW…VIVS), 126 to 146 (NVNA…LVAA), 164 to 184 (GVLI…VELF), and 219 to 239 (FVNT…VITL). A lysine--tRNA ligase region spans residues 619-1114 (EGLAPTATGP…LAFPLAKPRQ (496 aa)). A DNA-binding region (OB) is located at residues 674–751 (VRIAGRLLRI…LSLLANEWRM (78 aa)). The Mg(2+) site is built by aspartate 1025 and glutamate 1032.

The protein in the N-terminal section; belongs to the LPG synthetase family. In the C-terminal section; belongs to the class-II aminoacyl-tRNA synthetase family. Requires Mg(2+) as cofactor.

The protein localises to the cell membrane. It carries out the reaction tRNA(Lys) + L-lysine + ATP = L-lysyl-tRNA(Lys) + AMP + diphosphate. The catalysed reaction is L-lysyl-tRNA(Lys) + a 1,2-diacyl-sn-glycero-3-phospho-(1'-sn-glycerol) = a 1,2-diacyl-sn-glycero-3-phospho-1'-(3'-O-L-lysyl)-sn-glycerol + tRNA(Lys). Catalyzes the production of L-lysyl-tRNA(Lys)transfer and the transfer of a lysyl group from L-lysyl-tRNA(Lys) to membrane-bound phosphatidylglycerol (PG), which produces lysylphosphatidylglycerol (LPG), one of the components of the bacterial membrane with a positive net charge. LPG synthesis contributes to the resistance to cationic antimicrobial peptides (CAMPs) and likely protects M.tuberculosis against the CAMPs produced by competiting microorganisms (bacteriocins). In fact, the modification of anionic phosphatidylglycerol with positively charged L-lysine results in repulsion of the peptides. The protein is Lysylphosphatidylglycerol biosynthesis bifunctional protein LysX (lysX) of Rhodococcus opacus (strain B4).